A 424-amino-acid chain; its full sequence is Protein CLP1 homolog (424 aa).

ATP contacts are provided by residues Glu19, Lys60, and 122-127 (DVGKST).

It belongs to the Clp1 family. Clp1 subfamily.

The protein resides in the nucleus. In terms of biological role, required for endonucleolytic cleavage during polyadenylation-dependent pre-mRNA 3'-end formation. The polypeptide is Protein CLP1 homolog (cbc) (Aedes aegypti (Yellowfever mosquito)).